The primary structure comprises 140 residues: Zinc finger SWIM domain-containing protein 7 (140 aa).

Residues 66 to 114 form an SWIM-type zinc finger; it reads YQVLGSSSKTYTCLASCHYCSCPAFAFSVLRKSDSILCKHLLAVYLSQV.

The protein belongs to the SWS1 family. As to quaternary structure, interacts with RAD51D and XRCC3; involved in homologous recombination repair. Interacts with SWSAP1; they form a functional complex involved in homologous recombination repair and stabilize each other. As to expression, expressed in ovary and testis.

It is found in the nucleus. Its function is as follows. Involved in early stages of the homologous recombination repair (HRR) pathway of double-stranded DNA breaks arising during DNA replication or induced by DNA-damaging agents. Required for meiotic progression, hence for fertility. The protein is Zinc finger SWIM domain-containing protein 7 (ZSWIM7) of Homo sapiens (Human).